The chain runs to 142 residues: Rhinocerosin (142 aa).

An N-terminal signal peptide occupies residues M1 to A16. Residues Y17–R70 constitute a propeptide that is removed on maturation. A disordered region spans residues L72 to K96. Polar residues predominate over residues Q85–K96.

It belongs to the coleoptericin family. In terms of tissue distribution, strongly expressed in the fat body and the Malpighian tubules, and weakly expressed in hemocytes and midgut.

It localises to the secreted. Its function is as follows. Has strong antibacterial activity against E.coli, Streptococcus pyogenes, Staphylococcus aureus but not against Pseudomonas aeruginosa. The sequence is that of Rhinocerosin from Oryctes rhinoceros (Coconut rhinoceros beetle).